Here is a 356-residue protein sequence, read N- to C-terminus: Probable cysteine protease RDL6 (356 aa).

A signal peptide spans 1 to 26; sequence MGFVRPVCMTILFLLIVFVLSAPSSA. The propeptide at 27 to 132 is activation peptide; the sequence is MDLPATSGGH…RRYVPLAGDQ (106 aa). Residues asparagine 37 and asparagine 86 are each glycosylated (N-linked (GlcNAc...) asparagine). Intrachain disulfides connect cysteine 154–cysteine 195, cysteine 188–cysteine 229, and cysteine 288–cysteine 339. The active site involves cysteine 157. Catalysis depends on residues histidine 294 and asparagine 314.

It belongs to the peptidase C1 family.

Functionally, probable thiol protease. The protein is Probable cysteine protease RDL6 of Arabidopsis thaliana (Mouse-ear cress).